A 132-amino-acid polypeptide reads, in one-letter code: Phosphoribosyl-AMP cyclohydrolase (132 aa).

Aspartate 79 contributes to the Mg(2+) binding site. Cysteine 80 is a binding site for Zn(2+). 2 residues coordinate Mg(2+): aspartate 81 and aspartate 83. Zn(2+)-binding residues include cysteine 100 and cysteine 107.

The protein belongs to the PRA-CH family. As to quaternary structure, homodimer. It depends on Mg(2+) as a cofactor. Zn(2+) is required as a cofactor.

It localises to the cytoplasm. It carries out the reaction 1-(5-phospho-beta-D-ribosyl)-5'-AMP + H2O = 1-(5-phospho-beta-D-ribosyl)-5-[(5-phospho-beta-D-ribosylamino)methylideneamino]imidazole-4-carboxamide. The protein operates within amino-acid biosynthesis; L-histidine biosynthesis; L-histidine from 5-phospho-alpha-D-ribose 1-diphosphate: step 3/9. In terms of biological role, catalyzes the hydrolysis of the adenine ring of phosphoribosyl-AMP. The chain is Phosphoribosyl-AMP cyclohydrolase from Acidovorax ebreus (strain TPSY) (Diaphorobacter sp. (strain TPSY)).